A 495-amino-acid polypeptide reads, in one-letter code: Cobyric acid synthase (495 aa).

Positions 252-440 (RPKVVVLAYP…VHGLFADDGL (189 aa)) constitute a GATase cobBQ-type domain. The Nucleophile role is filled by C334. H432 is a catalytic residue.

The protein belongs to the CobB/CobQ family. CobQ subfamily.

It participates in cofactor biosynthesis; adenosylcobalamin biosynthesis. In terms of biological role, catalyzes amidations at positions B, D, E, and G on adenosylcobyrinic A,C-diamide. NH(2) groups are provided by glutamine, and one molecule of ATP is hydrogenolyzed for each amidation. The sequence is that of Cobyric acid synthase from Bradyrhizobium sp. (strain ORS 278).